Reading from the N-terminus, the 822-residue chain is Phenylalanine--tRNA ligase beta subunit (822 aa).

In terms of domain architecture, tRNA-binding spans 44–162; it reads LSKNTNLVVG…DQIALGSNAL (119 aa). A disordered region spans residues 201–224; it reads QSSNNNQETKSTNYKTKNSEDQTN. Positions 430-513 constitute a B5 domain; sequence RTNPTISLNL…RLYGCHKLPP (84 aa). Residues D491, D497, and D501 each coordinate Mg(2+). One can recognise an FDX-ACB domain in the interval 730–822; sequence PKFPTVIRDL…LIKHFHIEIR (93 aa).

It belongs to the phenylalanyl-tRNA synthetase beta subunit family. Type 1 subfamily. As to quaternary structure, tetramer of two alpha and two beta subunits. Mg(2+) serves as cofactor.

It is found in the cytoplasm. The enzyme catalyses tRNA(Phe) + L-phenylalanine + ATP = L-phenylalanyl-tRNA(Phe) + AMP + diphosphate + H(+). The polypeptide is Phenylalanine--tRNA ligase beta subunit (Onion yellows phytoplasma (strain OY-M)).